The chain runs to 953 residues: Nonsense-mediated mRNA decay factor SMG8 (953 aa).

Disordered regions lie at residues 571-604 and 629-653; these read AEDA…CSQP and PCFD…ESNT. The span at 573–586 shows a compositional bias: acidic residues; sequence DAELDPDEEDEELP. Positions 595–604 are enriched in polar residues; that stretch reads ITQSNGCSQP. The segment covering 634 to 653 has biased composition (low complexity); it reads SSSSEAESTCSGTSSEESNT.

It belongs to the SMG8 family.

Its function is as follows. Involved in nonsense-mediated decay (NMD) of mRNAs containing premature stop codons. Probable component of kinase complex containing nonC and recruited to stalled ribosomes. This chain is Nonsense-mediated mRNA decay factor SMG8, found in Drosophila pseudoobscura pseudoobscura (Fruit fly).